The sequence spans 466 residues: Light-independent protochlorophyllide reductase subunit N (466 aa).

Cysteine 24, cysteine 49, and cysteine 109 together coordinate [4Fe-4S] cluster.

It belongs to the BchN/ChlN family. Protochlorophyllide reductase is composed of three subunits; ChlL, ChlN and ChlB. Forms a heterotetramer of two ChlB and two ChlN subunits. It depends on [4Fe-4S] cluster as a cofactor.

The catalysed reaction is chlorophyllide a + oxidized 2[4Fe-4S]-[ferredoxin] + 2 ADP + 2 phosphate = protochlorophyllide a + reduced 2[4Fe-4S]-[ferredoxin] + 2 ATP + 2 H2O. The protein operates within porphyrin-containing compound metabolism; chlorophyll biosynthesis (light-independent). Its function is as follows. Component of the dark-operative protochlorophyllide reductase (DPOR) that uses Mg-ATP and reduced ferredoxin to reduce ring D of protochlorophyllide (Pchlide) to form chlorophyllide a (Chlide). This reaction is light-independent. The NB-protein (ChlN-ChlB) is the catalytic component of the complex. The protein is Light-independent protochlorophyllide reductase subunit N of Synechococcus sp. (strain JA-3-3Ab) (Cyanobacteria bacterium Yellowstone A-Prime).